A 403-amino-acid chain; its full sequence is Na(+)/H(+) antiporter NhaA (403 aa).

11 helical membrane-spanning segments follow: residues 23-43 (AFFL…PWAA), 66-86 (VAAW…ILEI), 101-121 (VALP…TYLL), 132-152 (GWAI…LALG), 161-181 (AWLM…IALF), 184-204 (GSMY…LIGA), 219-239 (GILL…AGVI), 257-277 (WVSS…FGFM), 297-317 (LGIM…ATLL), 333-353 (GMLF…LFVA), and 363-383 (IAPA…TGWF).

Belongs to the NhaA Na(+)/H(+) (TC 2.A.33) antiporter family.

The protein localises to the cell inner membrane. It carries out the reaction Na(+)(in) + 2 H(+)(out) = Na(+)(out) + 2 H(+)(in). In terms of biological role, na(+)/H(+) antiporter that extrudes sodium in exchange for external protons. In Gluconobacter oxydans (strain 621H) (Gluconobacter suboxydans), this protein is Na(+)/H(+) antiporter NhaA.